The chain runs to 607 residues: F-box protein At-B (607 aa).

The region spanning 9–47 (LAEEILKRLDLENLCSVACVSTTLRSAVVSGVLPSLTSL) is the F-box domain. LRR repeat units lie at residues 51–76 (VFSPDDETLNHVLRGCIGLSSLTLNC), 77–99 (LRLNAASVRGVLGPHLRELHLLR), 100–125 (CSLLSSTVLTYIGTLCPNLRVLTLEM), 130–155 (SPDVFQSNLTQMLNGCPYLESLQLNI), 228–253 (LDLISDRLIIAITGSLPQLVKLDLED), 262–286 (DNDLTYTGLQALGFCQQLTSLSLVR), 295–320 (FKRINDMGIFLLSEACKGLESVRLGG), 321–346 (FPKVSDAGFASLLHSCRNLKKFEVRG), 347–372 (AFLLSDLAFHDVTGSSCSLQEVRLST), 373–397 (CPLITSEAVKKLGLCGNLEVLDLGS), 398–422 (CKSISDSCLNSVSALRKLTSLNLAG), 424–447 (DVTDSGMLALGKSDVPITQLSLRG), 448–477 (CRRVSDRGISYLLNNEGTISKTLSTLDLGH), 478–503 (MPGISDRAIHTITHCCKALTELSIRS), 504–536 (CFHVTDSSIESLATWERQAEGGSKQLRKLNVHN), and 537–563 (CVSLTTGALRWLSKPSFAGLHWLGMGQ).

The sequence is that of F-box protein At-B (ATB) from Arabidopsis thaliana (Mouse-ear cress).